Reading from the N-terminus, the 218-residue chain is Heart- and neural crest derivatives-expressed protein 1 (218 aa).

Disordered stretches follow at residues 1 to 23, 56 to 112, and 172 to 203; these read MNLV…HPAH, APDF…RTES, and ADGG…RIKG. Over residues 8 to 21 the composition is skewed to basic residues; sequence AHHHHHHHHHHPHP. The segment covering 68–92 has biased composition (low complexity); sequence AAAAAASYGPDARPGQSPGRLEALG. Residues 95 to 107 are compositionally biased toward basic residues; the sequence is LGRRKGSGPKKER. One can recognise a bHLH domain in the interval 97–149; the sequence is RRKGSGPKKERRRTESINSAFAELRECIPNVPADTKLSKIKTLRLATSYIAYL. The residue at position 110 (T110) is a Phosphothreonine; by PLK4. S112 is subject to Phosphoserine; by PLK4.

As to quaternary structure, efficient DNA binding requires dimerization with another bHLH protein. Forms homodimers and heterodimers with TCF3 gene products E12 and E47, HAND2 and HEY1, HEY2 and HEYL (hairy-related transcription factors). Interacts with MDFIC. Interacts with SOX15; the interaction enhances HAND1-induced differentiation of trophoblast giant cells. Phosphorylation by PLK4 disrupts the interaction with MDFIC and leads to translocation into the nucleoplasm, allowing dimerization and transcription factor activity.

The protein localises to the nucleus. Its subcellular location is the nucleoplasm. It localises to the nucleolus. In terms of biological role, transcription factor that plays an essential role in both trophoblast giant cell differentiation and in cardiac morphogenesis. Binds the DNA sequence 5'-NRTCTG-3' (non-canonical E-box). Acts as a transcriptional repressor of SOX15. In the adult, could be required for ongoing expression of cardiac-specific genes. This Bos taurus (Bovine) protein is Heart- and neural crest derivatives-expressed protein 1 (HAND1).